Reading from the N-terminus, the 304-residue chain is Arginine-binding protein ArgT (304 aa).

A signal peptide spans 1–26 (MRFPKIPKRAVAATVGIVATSFTLAS). The N-palmitoyl cysteine moiety is linked to residue cysteine 27. The S-diacylglycerol cysteine moiety is linked to residue cysteine 27.

Belongs to the bacterial solute-binding protein 3 family. In terms of assembly, the complex is probably composed of two ATP-binding proteins (ArgV), two transmembrane proteins (ArgU) and a solute-binding protein (ArgT).

The protein localises to the cell membrane. Functionally, part of the ABC transporter complex ArgTUV involved in L-arginine import. May also transport L-citrulline. Binds L-arginine and its molecular precursor L-citrulline, but not L-histidine, L-glutamate, L-glutamine, L-lysine or L-cysteine. In Corynebacterium glutamicum (strain ATCC 13032 / DSM 20300 / JCM 1318 / BCRC 11384 / CCUG 27702 / LMG 3730 / NBRC 12168 / NCIMB 10025 / NRRL B-2784 / 534), this protein is Arginine-binding protein ArgT.